Here is a 320-residue protein sequence, read N- to C-terminus: Malate dehydrogenase (320 aa).

Residues 10–15 and Asp-34 contribute to the NAD(+) site; that span reads GAGQIG. Positions 83 and 89 each coordinate substrate. NAD(+) contacts are provided by residues Asn-96 and 119-121; that span reads ITN. Substrate-binding residues include Asn-121 and Arg-152. His-176 (proton acceptor) is an active-site residue.

This sequence belongs to the LDH/MDH superfamily. MDH type 3 family.

The enzyme catalyses (S)-malate + NAD(+) = oxaloacetate + NADH + H(+). In terms of biological role, catalyzes the reversible oxidation of malate to oxaloacetate. The protein is Malate dehydrogenase of Jannaschia sp. (strain CCS1).